The primary structure comprises 344 residues: GTP 3',8-cyclase (344 aa).

The Radical SAM core domain occupies 19-244; it reads PFARPITYLR…TPLAERTGGP (226 aa). Arg-28 provides a ligand contact to GTP. Residues Cys-35 and Cys-39 each coordinate [4Fe-4S] cluster. Residue Tyr-41 coordinates S-adenosyl-L-methionine. [4Fe-4S] cluster is bound at residue Cys-42. Arg-77 lines the GTP pocket. S-adenosyl-L-methionine is bound at residue Gly-81. A GTP-binding site is contributed by Thr-110. Ser-134 is a binding site for S-adenosyl-L-methionine. A GTP-binding site is contributed by Lys-170. Met-204 serves as a coordination point for S-adenosyl-L-methionine. [4Fe-4S] cluster contacts are provided by Cys-268 and Cys-271. 273-275 contacts GTP; it reads RVR. Cys-285 lines the [4Fe-4S] cluster pocket.

It belongs to the radical SAM superfamily. MoaA family. In terms of assembly, monomer and homodimer. Requires [4Fe-4S] cluster as cofactor.

It carries out the reaction GTP + AH2 + S-adenosyl-L-methionine = (8S)-3',8-cyclo-7,8-dihydroguanosine 5'-triphosphate + 5'-deoxyadenosine + L-methionine + A + H(+). The protein operates within cofactor biosynthesis; molybdopterin biosynthesis. In terms of biological role, catalyzes the cyclization of GTP to (8S)-3',8-cyclo-7,8-dihydroguanosine 5'-triphosphate. The protein is GTP 3',8-cyclase of Paracoccus denitrificans (strain Pd 1222).